The sequence spans 279 residues: Protein K1 (279 aa).

An N-terminal signal peptide occupies residues 1–18; it reads MFLYVVCSLAVCFRGLLS. Residues 19–220 lie on the Extracellular side of the membrane; sequence LSLQSSPNLC…TYLYIQEHLL (202 aa). Residues 221-241 form a helical membrane-spanning segment; the sequence is VFMTLVALIGTMCGILGTIIF. Residues 242 to 279 lie on the Cytoplasmic side of the membrane; sequence AHCQKQRDSNKTVPQQLQDYYSLHDLCTEDYTQPVDWY.

As to quaternary structure, homooligomer.

It is found in the host membrane. In terms of biological role, promotes host cell survival pathways and may contribute to pathogenesis by preventing infected cells from undergoing apoptosis. Acts in host B-cells by mimicking the activated B-cell receptor complex. The cytoplasmic tail of K1 can induce the phosphorylation of a number of different kinases, leading to the activation of survival signaling pathways. The protein is Protein K1 (K1) of Human herpesvirus 8 type P (isolate GK18) (HHV-8).